Reading from the N-terminus, the 238-residue chain is Zwei Ig domain protein zig-2 (238 aa).

A signal peptide spans 1–17 (MLKFTAISFVLLNAAES). Residues 31 to 130 (PLLKFTRTPN…NGLTKLEHVA (100 aa)) enclose the Ig-like C2-type 1 domain. Asn-40 and Asn-43 each carry an N-linked (GlcNAc...) asparagine glycan. Cys-54 and Cys-117 are disulfide-bonded. 3 N-linked (GlcNAc...) asparagine glycosylation sites follow: Asn-137, Asn-206, and Asn-216. The region spanning 149 to 230 (PFISMTVDFR…NHFGETTAIT (82 aa)) is the Ig-like C2-type 2 domain. Cys-170 and Cys-217 are oxidised to a cystine.

As to expression, expressed in PVT neurons and weakly in some head neurons.

The protein resides in the secreted. Functionally, probably not involved in maintaining the position of ASI and ASH head neuron cell bodies and ventral nerve cord axons of PVQ, PVP, RMEV, AVK and HSN neurons. The sequence is that of Zwei Ig domain protein zig-2 from Caenorhabditis elegans.